Consider the following 437-residue polypeptide: UDP-N-acetylmuramate--L-alanine ligase (437 aa).

114 to 120 (GTHGKTS) contributes to the ATP binding site.

This sequence belongs to the MurCDEF family.

The protein resides in the cytoplasm. It carries out the reaction UDP-N-acetyl-alpha-D-muramate + L-alanine + ATP = UDP-N-acetyl-alpha-D-muramoyl-L-alanine + ADP + phosphate + H(+). The protein operates within cell wall biogenesis; peptidoglycan biosynthesis. Functionally, cell wall formation. The protein is UDP-N-acetylmuramate--L-alanine ligase of Lactobacillus gasseri (strain ATCC 33323 / DSM 20243 / BCRC 14619 / CIP 102991 / JCM 1131 / KCTC 3163 / NCIMB 11718 / NCTC 13722 / AM63).